The chain runs to 337 residues: G-protein coupled receptor 26 (337 aa).

At 1–10 the chain is on the extracellular side; it reads MNSWDAGLAG. Residues 11-31 traverse the membrane as a helical segment; the sequence is LLVGTIGVSLLSNGLVLLCLL. The Cytoplasmic portion of the chain corresponds to 32–47; that stretch reads HSADIRRQAPALFTLN. A helical transmembrane segment spans residues 48 to 68; sequence LTCGNLLCTVVNMPLTLAGVV. The Extracellular segment spans residues 69 to 81; the sequence is AQRQPAGDRLCRL. A disulfide bridge links Cys79 with Cys156. Residues 82–102 traverse the membrane as a helical segment; the sequence is AAFLDTFLAANSMLSMAALSI. Over 103 to 123 the chain is Cytoplasmic; that stretch reads DRWVAVVFPLSYRAKMRLRDA. Residues 124-144 traverse the membrane as a helical segment; the sequence is AFMVAYTWLHALTFPATALAL. Topologically, residues 145-168 are extracellular; the sequence is SWLGFHQLYASCTLCSRRPDERLR. A helical transmembrane segment spans residues 169-189; sequence FAVFTSAFHALSFLLSFIVLC. At 190–245 the chain is on the cytoplasmic side; the sequence is FTYLKVLKVARFHCKRIDVITMQTLVLLVDIHPSVRERCLEEQKRRRQRATKKIST. A helical transmembrane segment spans residues 246-266; the sequence is FIGTFLVCFAPYVITRLVELF. Residues 267 to 276 lie on the Extracellular side of the membrane; that stretch reads STAPIGSHWG. A helical transmembrane segment spans residues 277-297; it reads VLSKCLAYSKAASDPFVYSLL. At 298-337 the chain is on the cytoplasmic side; the sequence is RHQYRRSCKELLNRIFNRRSLHSVGLTGDSHSQNILPVSE.

Belongs to the G-protein coupled receptor 1 family. In terms of tissue distribution, exclusively expressed in the brain. Prominent expression is detected throughout the entire neocortex at all rostrocaudal and dorsoventral levels. Strong expression is detected in olfactory and auditory sensory areas.

The protein localises to the cell membrane. Its function is as follows. Orphan receptor. Displays a significant level of constitutive activity. Its effect is mediated by G(s)-alpha protein that stimulate adenylate cyclase, resulting in an elevation of intracellular cAMP. The sequence is that of G-protein coupled receptor 26 (Gpr26) from Mus musculus (Mouse).